A 127-amino-acid polypeptide reads, in one-letter code: MARITAEDCNKIIPDRFRLVVLATRYAKLLNYKVETNQIKKEKRDKPPVIALRRIAAGKVSVAQLEQDLINSLRTRTMIEPLVNQDESEAVEEKFEYLSEVYIGEDYSDLDDQIFIDENGEDYETDK.

Belongs to the RNA polymerase subunit omega family. The RNAP catalytic core consists of 2 alpha, 1 beta, 1 beta' and 1 omega subunit. When a sigma factor is associated with the core the holoenzyme is formed, which can initiate transcription.

It carries out the reaction RNA(n) + a ribonucleoside 5'-triphosphate = RNA(n+1) + diphosphate. Its function is as follows. Promotes RNA polymerase assembly. Latches the N- and C-terminal regions of the beta' subunit thereby facilitating its interaction with the beta and alpha subunits. The chain is DNA-directed RNA polymerase subunit omega from Rickettsia peacockii (strain Rustic).